Here is a 360-residue protein sequence, read N- to C-terminus: S-adenosylmethionine:tRNA ribosyltransferase-isomerase (360 aa).

This sequence belongs to the QueA family. In terms of assembly, monomer.

It is found in the cytoplasm. It catalyses the reaction 7-aminomethyl-7-carbaguanosine(34) in tRNA + S-adenosyl-L-methionine = epoxyqueuosine(34) in tRNA + adenine + L-methionine + 2 H(+). The protein operates within tRNA modification; tRNA-queuosine biosynthesis. Functionally, transfers and isomerizes the ribose moiety from AdoMet to the 7-aminomethyl group of 7-deazaguanine (preQ1-tRNA) to give epoxyqueuosine (oQ-tRNA). This chain is S-adenosylmethionine:tRNA ribosyltransferase-isomerase, found in Burkholderia pseudomallei (strain K96243).